The sequence spans 292 residues: 4-hydroxy-tetrahydrodipicolinate synthase (292 aa).

A pyruvate-binding site is contributed by T45. The active-site Proton donor/acceptor is the Y133. The active-site Schiff-base intermediate with substrate is K161. Position 203 (I203) interacts with pyruvate.

It belongs to the DapA family. In terms of assembly, homotetramer; dimer of dimers.

It is found in the cytoplasm. It carries out the reaction L-aspartate 4-semialdehyde + pyruvate = (2S,4S)-4-hydroxy-2,3,4,5-tetrahydrodipicolinate + H2O + H(+). The protein operates within amino-acid biosynthesis; L-lysine biosynthesis via DAP pathway; (S)-tetrahydrodipicolinate from L-aspartate: step 3/4. Catalyzes the condensation of (S)-aspartate-beta-semialdehyde [(S)-ASA] and pyruvate to 4-hydroxy-tetrahydrodipicolinate (HTPA). This Nitrosococcus oceani (strain ATCC 19707 / BCRC 17464 / JCM 30415 / NCIMB 11848 / C-107) protein is 4-hydroxy-tetrahydrodipicolinate synthase.